An 801-amino-acid chain; its full sequence is Ribosome biogenesis protein ERB1 (801 aa).

Disordered stretches follow at residues 1–135 (MGSK…LEDR) and 358–377 (PEYLPTKEEREEWEKMDPED). Residues 35-90 (SEDEEDYIPSSEVDEDDDDDADESASEDSDDSNDSEDDEVEEDDEALLSDEIPSEG) are compositionally biased toward acidic residues. Basic and acidic residues-rich tracts occupy residues 91–113 (ESEKDQDLAESKESKQDQDKEPS), 124–135 (PPRKEDEELEDR), and 362–377 (PTKEEREEWEKMDPED). WD repeat units lie at residues 451 to 490 (GHEGRVRSVAIDPTGVALATGGDDGTVRVWELLTGRQVWS) and 494 to 534 (NGDE…VTPA). Residues 546 to 570 (GFGHATNGKQQANLPPGKEPPGKWA) are disordered. WD repeat units follow at residues 586 to 628 (TVRS…TQIP), 631 to 669 (KLNGLAQTASFHPLRPLFFVATQRSIRCYDLQKLELVKI), 672 to 711 (PGAKWISSFDVHPGGDNLVVGSYDKRLLWHDLDLSNRPYK), 715 to 755 (FHTE…DQLE), and 771 to 801 (VNKLGVLDIDWHPREPWCVSAGADGTARLWM).

This sequence belongs to the WD repeat BOP1/ERB1 family. In terms of assembly, component of the NOP7 complex, composed of ERB1, NOP7 and YTM1. The complex is held together by ERB1, which interacts with NOP7 via its N-terminal domain and with YTM1 via a high-affinity interaction between the seven-bladed beta-propeller domains of the 2 proteins. The NOP7 complex associates with the 66S pre-ribosome.

The protein resides in the nucleus. It is found in the nucleolus. The protein localises to the nucleoplasm. Its function is as follows. Component of the NOP7 complex, which is required for maturation of the 25S and 5.8S ribosomal RNAs and formation of the 60S ribosome. This chain is Ribosome biogenesis protein ERB1, found in Chaetomium thermophilum (strain DSM 1495 / CBS 144.50 / IMI 039719) (Thermochaetoides thermophila).